The primary structure comprises 342 residues: Isopentenyl-diphosphate delta-isomerase (342 aa).

11–12 (RK) contacts substrate. Residues Ser68, 69–71 (SMT), Ser99, and Asn127 each bind FMN. Residue 99 to 101 (SMR) coordinates substrate. Residue Gln162 participates in substrate binding. Glu163 contacts Mg(2+). Residues Lys194, Thr224, 274-276 (GLK), and 295-296 (AG) contribute to the FMN site.

Belongs to the IPP isomerase type 2 family. As to quaternary structure, homooctamer. Dimer of tetramers. It depends on FMN as a cofactor. NADPH serves as cofactor. Requires Mg(2+) as cofactor.

The protein localises to the cytoplasm. The enzyme catalyses isopentenyl diphosphate = dimethylallyl diphosphate. In terms of biological role, involved in the biosynthesis of isoprenoids. Catalyzes the 1,3-allylic rearrangement of the homoallylic substrate isopentenyl (IPP) to its allylic isomer, dimethylallyl diphosphate (DMAPP). This chain is Isopentenyl-diphosphate delta-isomerase, found in Rickettsia akari (strain Hartford).